The primary structure comprises 619 residues: Dihydroxy-acid dehydratase (619 aa).

A Mg(2+)-binding site is contributed by Asp-81. Cys-122 contacts [2Fe-2S] cluster. Mg(2+)-binding residues include Asp-123 and Lys-124. At Lys-124 the chain carries N6-carboxylysine. Cys-195 is a [2Fe-2S] cluster binding site. Glu-494 lines the Mg(2+) pocket. Residue Ser-520 is the Proton acceptor of the active site.

The protein belongs to the IlvD/Edd family. Homodimer. Requires [2Fe-2S] cluster as cofactor. Mg(2+) serves as cofactor.

The catalysed reaction is (2R)-2,3-dihydroxy-3-methylbutanoate = 3-methyl-2-oxobutanoate + H2O. The enzyme catalyses (2R,3R)-2,3-dihydroxy-3-methylpentanoate = (S)-3-methyl-2-oxopentanoate + H2O. The protein operates within amino-acid biosynthesis; L-isoleucine biosynthesis; L-isoleucine from 2-oxobutanoate: step 3/4. It participates in amino-acid biosynthesis; L-valine biosynthesis; L-valine from pyruvate: step 3/4. Functionally, functions in the biosynthesis of branched-chain amino acids. Catalyzes the dehydration of (2R,3R)-2,3-dihydroxy-3-methylpentanoate (2,3-dihydroxy-3-methylvalerate) into 2-oxo-3-methylpentanoate (2-oxo-3-methylvalerate) and of (2R)-2,3-dihydroxy-3-methylbutanoate (2,3-dihydroxyisovalerate) into 2-oxo-3-methylbutanoate (2-oxoisovalerate), the penultimate precursor to L-isoleucine and L-valine, respectively. This Shewanella oneidensis (strain ATCC 700550 / JCM 31522 / CIP 106686 / LMG 19005 / NCIMB 14063 / MR-1) protein is Dihydroxy-acid dehydratase.